The following is a 442-amino-acid chain: Decapping and exoribonuclease protein 1 (442 aa).

Over residues 31-40 (QSKLCKEKTT) the composition is skewed to basic and acidic residues. Positions 31–56 (QSKLCKEKTTSDSSSSRKPSQQRDNY) are disordered. Residues 41–53 (SDSSSSRKPSQQR) show a composition bias toward low complexity. R101 contributes to the substrate binding site. Residue E255 participates in a divalent metal cation binding. E293 serves as a coordination point for substrate. Positions 295, 306, and 307 each coordinate a divalent metal cation. Substrate-binding residues include K308 and Q330.

Belongs to the DXO/Dom3Z family. A divalent metal cation is required as a cofactor.

It localises to the cytoplasm. The enzyme catalyses a 5'-end NAD(+)-phospho-ribonucleoside in mRNA + H2O = a 5'-end phospho-ribonucleoside in mRNA + NAD(+) + H(+). It carries out the reaction a 5'-end (N(7)-methyl 5'-triphosphoguanosine)-ribonucleoside-ribonucleotide in mRNA + H2O = a (N(7)-methyl 5'-triphosphoguanosine)-nucleoside + a 5'-end phospho-ribonucleoside in mRNA + H(+). Decapping enzyme for NAD-capped RNAs: specifically hydrolyzes the nicotinamide adenine dinucleotide (NAD) cap from a subset of RNAs by removing the entire NAD moiety from the 5'-end of an NAD-capped RNA. The NAD-cap is present at the 5'-end of some RNAs and snoRNAs. In contrast to the canonical 5'-end N7 methylguanosine (m7G) cap, the NAD cap promotes mRNA decay. Also acts as a non-canonical decapping enzyme that removes the entire cap structure of m7G capped or incompletely capped RNAs. Has decapping activity toward incomplete 5'-end m7G cap mRNAs such as unmethylated 5'-end-capped RNA (cap0), while it has no activity toward 2'-O-ribose methylated m7G cap (cap1). Also has 5'-3' exonuclease activity. The chain is Decapping and exoribonuclease protein 1 (DXO1) from Saccharomyces cerevisiae (strain ATCC 204508 / S288c) (Baker's yeast).